The primary structure comprises 809 residues: H(+)/Cl(-) exchange transporter 7 (809 aa).

The Cytoplasmic portion of the chain corresponds to methionine 1 to arginine 130. Phosphoserine occurs at positions 9 and 64. The next 2 membrane-spanning stretches (helical) occupy residues tryptophan 131–valine 163 and phenylalanine 178–isoleucine 201. The Selectivity filter part_1 signature appears at glycine 207–proline 211. Position 208 (serine 208) interacts with chloride. Residues isoleucine 210–leucine 217 constitute an intramembrane region (helical). The next 2 helical transmembrane spans lie at arginine 227–glycine 245 and glutamate 251–glycine 268. A Selectivity filter part_2 motif is present at residues glycine 249–proline 253. 2 consecutive intramembrane regions (helical) follow at residues phenylalanine 292–alanine 304 and proline 308–leucine 316. 5 helical membrane passes run phenylalanine 326–valine 345, isoleucine 379–arginine 409, proline 414–isoleucine 436, proline 491–leucine 511, and glycine 516–isoleucine 539. A Selectivity filter part_3 motif is present at residues glycine 516–proline 520. Phenylalanine 518 is a chloride binding site. Residues glycine 549 to isoleucine 563 constitute an intramembrane region (helical). The note=Loop between two helices intramembrane region spans valine 564–methionine 566. The segment at residues threonine 567–threonine 578 is an intramembrane region (helical). An intramembrane region (note=Loop between two helices) is located at residues serine 579 to threonine 582. A helical membrane pass occupies residues tyrosine 583–phenylalanine 601. The Cytoplasmic portion of the chain corresponds to isoleucine 602–threonine 809. Tyrosine 606 is a binding site for chloride. 2 CBS domains span residues methionine 635–glutamate 699 and methionine 745–glutamate 803. ATP is bound by residues histidine 662–glycine 664 and threonine 787–aspartate 790. The residue at position 805 (serine 805) is a Phosphoserine.

Belongs to the chloride channel (TC 2.A.49) family. ClC-7/CLCN7 subfamily. Chloride channel 7 are heteromers of alpha (CLCN7) and beta (OSTM1) subunits.

Its subcellular location is the lysosome membrane. The catalysed reaction is 2 chloride(in) + H(+)(out) = 2 chloride(out) + H(+)(in). Slowly voltage-gated channel mediating the exchange of chloride ions against protons. Functions as antiporter and contributes to the acidification of the lysosome lumen and may be involved in maintaining lysosomal pH. The CLC channel family contains both chloride channels and proton-coupled anion transporters that exchange chloride or another anion for protons. The presence of conserved gating glutamate residues is typical for family members that function as antiporters. The sequence is that of H(+)/Cl(-) exchange transporter 7 (CLCN7) from Bos taurus (Bovine).